Here is a 396-residue protein sequence, read N- to C-terminus: Phosphoglycerate kinase (396 aa).

Substrate is bound by residues 23–25 (DFN), Arg38, 61–64 (HMGK), Arg122, and Arg155. Residues Lys206, Gly296, Glu327, and 353–356 (GGDS) contribute to the ATP site.

It belongs to the phosphoglycerate kinase family. In terms of assembly, monomer.

It is found in the cytoplasm. It catalyses the reaction (2R)-3-phosphoglycerate + ATP = (2R)-3-phospho-glyceroyl phosphate + ADP. It functions in the pathway carbohydrate degradation; glycolysis; pyruvate from D-glyceraldehyde 3-phosphate: step 2/5. In Clostridium botulinum (strain Eklund 17B / Type B), this protein is Phosphoglycerate kinase.